Here is a 388-residue protein sequence, read N- to C-terminus: Pepsin A-3 (388 aa).

Positions 1–15 (MKWLLLLGLVALSEC) are cleaved as a signal peptide. Positions 16–62 (IMYKVPLIRKKSLRRTLSERGLLKDFLKKHNLNPARKYFPQWKAPTL) are cleaved as a propeptide — activation peptide. The Peptidase A1 domain occupies 76–385 (YFGTIGIGTP…DRANNQVGLA (310 aa)). Asp94 is a catalytic residue. Cystine bridges form between Cys107–Cys112 and Cys268–Cys272. Asp277 is an active-site residue. Cys311 and Cys344 are oxidised to a cystine.

The protein belongs to the peptidase A1 family.

It localises to the secreted. It carries out the reaction Preferential cleavage: hydrophobic, preferably aromatic, residues in P1 and P1' positions. Cleaves 1-Phe-|-Val-2, 4-Gln-|-His-5, 13-Glu-|-Ala-14, 14-Ala-|-Leu-15, 15-Leu-|-Tyr-16, 16-Tyr-|-Leu-17, 23-Gly-|-Phe-24, 24-Phe-|-Phe-25 and 25-Phe-|-Tyr-26 bonds in the B chain of insulin.. In terms of biological role, shows particularly broad specificity; although bonds involving phenylalanine and leucine are preferred, many others are also cleaved to some extent. In Homo sapiens (Human), this protein is Pepsin A-3 (PGA3).